The chain runs to 296 residues: Protoheme IX farnesyltransferase (296 aa).

9 consecutive transmembrane segments (helical) span residues 11–31 (PGII…AAQG), 35–55 (YPLF…GCVF), 84–104 (VTLV…YVAA), 107–127 (LAMW…SLYM), 132–152 (VYGT…GYCA), 162–182 (LILL…IAIF), 208–228 (ITLY…GGYA), 229–249 (GYKY…MALS), and 264–284 (LFVF…VDSM).

Belongs to the UbiA prenyltransferase family. Protoheme IX farnesyltransferase subfamily.

Its subcellular location is the cell inner membrane. It catalyses the reaction heme b + (2E,6E)-farnesyl diphosphate + H2O = Fe(II)-heme o + diphosphate. It functions in the pathway porphyrin-containing compound metabolism; heme O biosynthesis; heme O from protoheme: step 1/1. Its function is as follows. Converts heme B (protoheme IX) to heme O by substitution of the vinyl group on carbon 2 of heme B porphyrin ring with a hydroxyethyl farnesyl side group. The polypeptide is Protoheme IX farnesyltransferase (Pectobacterium atrosepticum (strain SCRI 1043 / ATCC BAA-672) (Erwinia carotovora subsp. atroseptica)).